Here is a 506-residue protein sequence, read N- to C-terminus: Mitogen-activated protein kinase 13 (506 aa).

The Protein kinase domain maps to 13 to 304 (YQIQEVVGKG…AEEALADPYF (292 aa)). Residues 19–27 (VGKGSYGVV) and Lys-42 contribute to the ATP site. The active-site Proton acceptor is the Asp-139. The residue at position 175 (Thr-175) is a Phosphothreonine. A TXY motif is present at residues 175–177 (TDY). The residue at position 177 (Tyr-177) is a Phosphotyrosine. Residues 384–421 (YSRGERSTPLRRQHASLPRERVCSSVDSNNQDSDNEER) form a disordered region.

It belongs to the protein kinase superfamily. CMGC Ser/Thr protein kinase family. MAP kinase subfamily. Post-translationally, dually phosphorylated on Thr-175 and Tyr-177, which activates the enzyme.

It carries out the reaction L-seryl-[protein] + ATP = O-phospho-L-seryl-[protein] + ADP + H(+). The catalysed reaction is L-threonyl-[protein] + ATP = O-phospho-L-threonyl-[protein] + ADP + H(+). With respect to regulation, activated by threonine and tyrosine phosphorylation. This Oryza sativa subsp. indica (Rice) protein is Mitogen-activated protein kinase 13 (MPK13).